The following is a 482-amino-acid chain: tRNA sulfurtransferase (482 aa).

The 105-residue stretch at Leu61–Arg165 folds into the THUMP domain. ATP is bound by residues Leu183–Ile184, Lys265, Gly287, and Gln296. Cys344 and Cys456 are oxidised to a cystine. A Rhodanese domain is found at Phe404–Pro482. The active-site Cysteine persulfide intermediate is Cys456.

Belongs to the ThiI family.

The protein resides in the cytoplasm. The enzyme catalyses [ThiI sulfur-carrier protein]-S-sulfanyl-L-cysteine + a uridine in tRNA + 2 reduced [2Fe-2S]-[ferredoxin] + ATP + H(+) = [ThiI sulfur-carrier protein]-L-cysteine + a 4-thiouridine in tRNA + 2 oxidized [2Fe-2S]-[ferredoxin] + AMP + diphosphate. It carries out the reaction [ThiS sulfur-carrier protein]-C-terminal Gly-Gly-AMP + S-sulfanyl-L-cysteinyl-[cysteine desulfurase] + AH2 = [ThiS sulfur-carrier protein]-C-terminal-Gly-aminoethanethioate + L-cysteinyl-[cysteine desulfurase] + A + AMP + 2 H(+). Its pathway is cofactor biosynthesis; thiamine diphosphate biosynthesis. In terms of biological role, catalyzes the ATP-dependent transfer of a sulfur to tRNA to produce 4-thiouridine in position 8 of tRNAs, which functions as a near-UV photosensor. Also catalyzes the transfer of sulfur to the sulfur carrier protein ThiS, forming ThiS-thiocarboxylate. This is a step in the synthesis of thiazole, in the thiamine biosynthesis pathway. The sulfur is donated as persulfide by IscS. The sequence is that of tRNA sulfurtransferase from Salmonella typhi.